The primary structure comprises 426 residues: Gamma-glutamyl phosphate reductase (426 aa).

Belongs to the gamma-glutamyl phosphate reductase family.

Its subcellular location is the cytoplasm. It carries out the reaction L-glutamate 5-semialdehyde + phosphate + NADP(+) = L-glutamyl 5-phosphate + NADPH + H(+). It functions in the pathway amino-acid biosynthesis; L-proline biosynthesis; L-glutamate 5-semialdehyde from L-glutamate: step 2/2. Its function is as follows. Catalyzes the NADPH-dependent reduction of L-glutamate 5-phosphate into L-glutamate 5-semialdehyde and phosphate. The product spontaneously undergoes cyclization to form 1-pyrroline-5-carboxylate. The chain is Gamma-glutamyl phosphate reductase from Delftia acidovorans (strain DSM 14801 / SPH-1).